A 396-amino-acid chain; its full sequence is S-adenosylmethionine synthase 2 (396 aa).

Residue glutamate 13 participates in Mg(2+) binding. Histidine 19 contributes to the ATP binding site. Glutamate 47 provides a ligand contact to K(+). Glutamate 60 and glutamine 103 together coordinate L-methionine. Residues 171 to 173 (DGK), 239 to 242 (SGRF), aspartate 250, 256 to 257 (RK), alanine 273, lysine 277, and lysine 281 each bind ATP. L-methionine is bound at residue aspartate 250. Lysine 281 is a binding site for L-methionine.

This sequence belongs to the AdoMet synthase family. As to quaternary structure, homotetramer. Mn(2+) serves as cofactor. The cofactor is Mg(2+). Co(2+) is required as a cofactor. Requires K(+) as cofactor.

The protein resides in the cytoplasm. The catalysed reaction is L-methionine + ATP + H2O = S-adenosyl-L-methionine + phosphate + diphosphate. Its pathway is amino-acid biosynthesis; S-adenosyl-L-methionine biosynthesis; S-adenosyl-L-methionine from L-methionine: step 1/1. Functionally, catalyzes the formation of S-adenosylmethionine from methionine and ATP. The reaction comprises two steps that are both catalyzed by the same enzyme: formation of S-adenosylmethionine (AdoMet) and triphosphate, and subsequent hydrolysis of the triphosphate. The polypeptide is S-adenosylmethionine synthase 2 (SAM2) (Dianthus caryophyllus (Carnation)).